The sequence spans 430 residues: MVSYEPMRGMEDYFDVDSKIIRWIESNFRETVEKAGYKEAMTPIVEDFELFSLKGGEELRNTMYVFKDKGEREVALRPEITPSIVRLYLNSLQHYPKPLRIFYIGRVYRYDEPQQGRYREFRQAGVELLGSDSILADIEVLHLLENFYRRINLKDKISLKINNIGIFRIIFNKLSFDEQVQEHLLHLLDKGKIEEAEKILDEKIRDNSKIRQFIYTLITNGRSLKLEEAMREAEKTELSELVNEIENLKLISEILSSLNLDHIVDLGFVRGLAYYTGPIFEVVKRDLPFSIAGGGRYDSLVEVYGGNRTPAVGFAIGIERTMYALNKDGIKFDSNAPLVAVVALDRSVIPHALSIVSMLRDKGFITVLNNKEIPLSKLVPLYAEQGFTHLIIMGQKEITSGKVTVRNLVKREQITTDVKELTNVITAPDK.

This sequence belongs to the class-II aminoacyl-tRNA synthetase family.

It localises to the cytoplasm. The enzyme catalyses tRNA(His) + L-histidine + ATP = L-histidyl-tRNA(His) + AMP + diphosphate + H(+). The sequence is that of Histidine--tRNA ligase from Metallosphaera sedula (strain ATCC 51363 / DSM 5348 / JCM 9185 / NBRC 15509 / TH2).